The chain runs to 196 residues: MPFVVIITGIPGVGKSTITRLALQRTKAKFRLINFGDLMFEEAVKAGLVKHRDEMRKLPLKIQRELQMKAAKKITEMAKEHPILVDTHATIKTPHGYMLGLPYEVVKTLNPNFIVIIEATPSEILGRRLRDLKRDRDVETEEQIQRHQDLNRAAAIAYAMHSNALIKIIENHEDKGLEEAVNELVKILDLAVNEYA.

9–17 (GIPGVGKST) contributes to the ATP binding site.

Belongs to the archaeal adenylate kinase family.

The protein resides in the cytoplasm. It carries out the reaction AMP + ATP = 2 ADP. In Pyrococcus furiosus (strain ATCC 43587 / DSM 3638 / JCM 8422 / Vc1), this protein is Adenylate kinase.